Consider the following 234-residue polypeptide: HTH-type transcriptional regulator MT1864 (234 aa).

One can recognise an HTH tetR-type domain in the interval 15–75 (EQIEAKIVEL…LLLVDAYSDL (61 aa)). Positions 38-57 (SLRAIARNLGMVSSAVYRYV) form a DNA-binding region, H-T-H motif.

As to quaternary structure, homodimer.

It is found in the cytoplasm. Its function is as follows. May participate in the regulatory network that controls the expression of MmpL lipid transporters. This Mycobacterium tuberculosis (strain CDC 1551 / Oshkosh) protein is HTH-type transcriptional regulator MT1864.